Here is a 230-residue protein sequence, read N- to C-terminus: UPF0494 membrane protein PB2B2.14c (230 aa).

The next 3 membrane-spanning stretches (helical) occupy residues 78–98 (WPLLIIWCILIVFAIDKNFEV), 120–140 (IWGPIAIYICLFVLLLLGLIY), and 148–168 (AIPLISIVIAAVVVIIAVAMV).

This sequence belongs to the UPF0494 family.

It is found in the membrane. The polypeptide is UPF0494 membrane protein PB2B2.14c (Schizosaccharomyces pombe (strain 972 / ATCC 24843) (Fission yeast)).